Reading from the N-terminus, the 404-residue chain is Multidrug resistance protein MdtG (404 aa).

Helical transmembrane passes span 19-39 (LGCF…PLYV), 56-76 (LVFS…GGLA), 90-110 (LGMA…QFLI), 113-133 (ALLG…ATQV), 144-164 (TLST…GLLA), 171-191 (PVFF…FFFI), 222-242 (LFVT…ILTL), 254-274 (IAFI…LSAP), 288-308 (ILIV…FVQT), 317-337 (FLLG…LVYN), and 376-396 (AVFC…WNSL).

Belongs to the major facilitator superfamily. DHA1 family. MdtG (TC 2.A.1.2.20) subfamily.

It localises to the cell inner membrane. The protein is Multidrug resistance protein MdtG of Salmonella schwarzengrund (strain CVM19633).